We begin with the raw amino-acid sequence, 344 residues long: Phosphate acyltransferase (344 aa).

The protein belongs to the PlsX family. As to quaternary structure, homodimer. Probably interacts with PlsY.

Its subcellular location is the cytoplasm. The enzyme catalyses a fatty acyl-[ACP] + phosphate = an acyl phosphate + holo-[ACP]. The protein operates within lipid metabolism; phospholipid metabolism. In terms of biological role, catalyzes the reversible formation of acyl-phosphate (acyl-PO(4)) from acyl-[acyl-carrier-protein] (acyl-ACP). This enzyme utilizes acyl-ACP as fatty acyl donor, but not acyl-CoA. The polypeptide is Phosphate acyltransferase (Sodalis glossinidius (strain morsitans)).